Consider the following 73-residue polypeptide: Gas vesicle protein M2 (73 aa).

Belongs to the gas vesicle GvpA family. GvpF to GvpM interact with each other in vitro, and may form multi-subunit complex(es). Might interact with GvpA.

It localises to the gas vesicle. Its function is as follows. Proteins GvpF to GvpM might be involved in nucleating gas vesicle formation. A minor component of the gas vesicle. Gas vesicles are hollow, gas filled proteinaceous nanostructures found in several microbial planktonic microorganisms. They allow positioning of halobacteria at the optimal depth for growth in the poorly aerated, shallow brine pools of their habitat. Functionally, expression of 2 c-vac DNA fragments containing 2 divergently transcribed regions (gvpE-gvpF-gvpG-gvpH-gvpI-gvpJ-gvpK-gvpL-gvpM and gvpA-gvpC-gvpN-gvpO) allows H.volcanii to produce gas vesicles. This Halobacterium salinarum (strain ATCC 700922 / JCM 11081 / NRC-1) (Halobacterium halobium) protein is Gas vesicle protein M2.